The following is a 548-amino-acid chain: Membrane protein insertase YidC (548 aa).

Residues 6 to 26 (NLLVIALLFVSFMIWQAWEQD) traverse the membrane as a helical segment. The tract at residues 28–56 (NPQPQTQQTTQTTTTAAGSAADQGVPASG) is disordered. Residues 29–42 (PQPQTQQTTQTTTT) are compositionally biased toward low complexity. 4 helical membrane-spanning segments follow: residues 350–370 (FVGN…GIMY), 424–444 (FPLI…MGSI), 458–478 (LSAQ…MFFI), and 499–519 (PVIF…YYIV).

This sequence belongs to the OXA1/ALB3/YidC family. Type 1 subfamily. Interacts with the Sec translocase complex via SecD. Specifically interacts with transmembrane segments of nascent integral membrane proteins during membrane integration.

The protein resides in the cell inner membrane. Functionally, required for the insertion and/or proper folding and/or complex formation of integral membrane proteins into the membrane. Involved in integration of membrane proteins that insert both dependently and independently of the Sec translocase complex, as well as at least some lipoproteins. Aids folding of multispanning membrane proteins. In Salmonella enteritidis PT4 (strain P125109), this protein is Membrane protein insertase YidC.